Consider the following 507-residue polypeptide: tRNA(Ile)-lysidine synthase (507 aa).

24 to 29 (SGGGDS) contributes to the ATP binding site. The CMP/dCMP-type deaminase domain occupies 370–500 (PPEEAHMAEA…KLLRDFFARL (131 aa)). His420, Cys445, and Cys448 together coordinate Zn(2+).

This sequence belongs to the tRNA(Ile)-lysidine synthase family.

It is found in the cytoplasm. The catalysed reaction is cytidine(34) in tRNA(Ile2) + L-lysine + ATP = lysidine(34) in tRNA(Ile2) + AMP + diphosphate + H(+). In terms of biological role, ligates lysine onto the cytidine present at position 34 of the AUA codon-specific tRNA(Ile) that contains the anticodon CAU, in an ATP-dependent manner. Cytidine is converted to lysidine, thus changing the amino acid specificity of the tRNA from methionine to isoleucine. In Thermus thermophilus (strain ATCC 27634 / DSM 579 / HB8), this protein is tRNA(Ile)-lysidine synthase (tilS).